The primary structure comprises 714 residues: Developmentally-regulated protein kinase 1 (714 aa).

2 disordered regions span residues 88-122 and 174-266; these read NNNI…NNFN and CNMI…IINN. Low complexity-rich tracts occupy residues 174 to 200, 209 to 227, and 240 to 266; these read CNMI…NNNN, PSSN…TTSS, and NFNQ…IINN. The region spanning 334–589 is the Protein kinase domain; the sequence is FNFYGSLGSG…SCSIRNHKWF (256 aa). ATP-binding positions include 340–348 and Lys363; that span reads LGSGSFGTA. Asp457 serves as the catalytic Proton acceptor. A Phosphothreonine modification is found at Thr488.

Belongs to the protein kinase superfamily. AGC Ser/Thr protein kinase family.

The enzyme catalyses L-seryl-[protein] + ATP = O-phospho-L-seryl-[protein] + ADP + H(+). The catalysed reaction is L-threonyl-[protein] + ATP = O-phospho-L-threonyl-[protein] + ADP + H(+). The protein is Developmentally-regulated protein kinase 1 (pkaD) of Dictyostelium discoideum (Social amoeba).